Consider the following 296-residue polypeptide: MNWITNYVRPKINSMLGRREMPENLWIKDPSTGEMVFHKDLESNQFVIPSSGHHMRIKAKDRLRFFFDNGEYTTLEAPKVPLDPLKFRDEKKYIDRLKDYRSRTGMDDAIVNGLGTIEGLPIVATVQDFSFMGGSLGMGAGEAIIQGFEKAIELKRPLVLFASSGGARMQEGILSLMQLPRTTVAVEMLKEAGLLYIVVLTNPTTGGVTASYAMLGDIHIAEPGALIGFAGPRVIEQTIREKLPEGFQSSEYLMEHGMVDMVVSRLELKATIARLLKIMTKQPANSDAPAPPEAGC.

Positions 25 to 294 (LWIKDPSTGE…NSDAPAPPEA (270 aa)) constitute a CoA carboxyltransferase N-terminal domain.

It belongs to the AccD/PCCB family. In terms of assembly, acetyl-CoA carboxylase is a heterohexamer composed of biotin carboxyl carrier protein (AccB), biotin carboxylase (AccC) and two subunits each of ACCase subunit alpha (AccA) and ACCase subunit beta (AccD).

The protein resides in the cytoplasm. The catalysed reaction is N(6)-carboxybiotinyl-L-lysyl-[protein] + acetyl-CoA = N(6)-biotinyl-L-lysyl-[protein] + malonyl-CoA. Its pathway is lipid metabolism; malonyl-CoA biosynthesis; malonyl-CoA from acetyl-CoA: step 1/1. Component of the acetyl coenzyme A carboxylase (ACC) complex. Biotin carboxylase (BC) catalyzes the carboxylation of biotin on its carrier protein (BCCP) and then the CO(2) group is transferred by the transcarboxylase to acetyl-CoA to form malonyl-CoA. The sequence is that of Acetyl-coenzyme A carboxylase carboxyl transferase subunit beta from Brucella ovis (strain ATCC 25840 / 63/290 / NCTC 10512).